A 1321-amino-acid chain; its full sequence is Serine/threonine-protein kinase SIK3 (1321 aa).

The tract at residues 1–59 is disordered; the sequence is MAAAAASGAGGAAGAGTGGAGPAGRLLPPPAPGSPAAPAAVSPAAGQPRPPAPASRGPM. The span at 8–22 shows a compositional bias: gly residues; that stretch reads GAGGAAGAGTGGAGP. Residues 36-47 are compositionally biased toward low complexity; sequence AAPAAVSPAAGQ. The Protein kinase domain occupies 66–317; the sequence is YEIDRTIGKG…MEQICKHKWM (252 aa). T71 is subject to Phosphothreonine. ATP is bound by residues 72–80 and K95; that span reads IGKGNFAVV. Residue E113 is modified to Phosphothreonine. The Proton acceptor role is filled by D188. T221 carries the phosphothreonine; by LKB1 modification. The UBA domain occupies 344–384; that stretch reads PLNEDVLLAMEDMGLDKEQTLQSLRSDAYDHYSAIYSLLCD. T469 bears the Phosphothreonine mark. A phosphoserine mark is found at S551, S591, and S592. Residues 585-614 form a disordered region; that stretch reads TPVDEESSDGEPDQEAVQSSTYKDSNTLHL. Positions 587 to 598 are enriched in acidic residues; the sequence is VDEESSDGEPDQ. Residues 600–613 show a composition bias toward polar residues; the sequence is AVQSSTYKDSNTLH. Residues S626 and S647 each carry the phosphoserine modification. The segment at 727–772 is disordered; that stretch reads IQPSSPPPNHPNNHLFRQPSNSPPPMSSAMIQPHGAASSSQFQGLP. Polar residues predominate over residues 763-772; the sequence is ASSSQFQGLP. The residue at position 866 (S866) is a Phosphoserine. The disordered stretch occupies residues 894–945; the sequence is LFSDQSRGSPSSYSPSTGVGFSPTQALKVPPLDQFPTFPPSAHQQPPHYTTS. Residues 896–909 are compositionally biased toward low complexity; the sequence is SDQSRGSPSSYSPS. Residues 935–945 are compositionally biased toward polar residues; sequence AHQQPPHYTTS. A Phosphoserine modification is found at S978. R986 is modified (omega-N-methylarginine). A compositionally biased stretch (polar residues) spans 1256 to 1265; sequence SLMGSQQFQD. The disordered stretch occupies residues 1256 to 1289; it reads SLMGSQQFQDGENEECGASLGGHEHPDLSDGSQH.

This sequence belongs to the protein kinase superfamily. CAMK Ser/Thr protein kinase family. SNF1 subfamily. Binds to and is activated by YWHAZ when phosphorylated on Thr-221. Interacts with 14-3-3 proteins. Interacts with HDAC4; this interaction leads to HDAC4 retention in the cytoplasm. Interacts with DEPTOR, MLST8/GbetaL, RICTOR and RPTOR. The cofactor is Mg(2+). Post-translationally, phosphorylated at Thr-221 by STK11/LKB1 in complex with STE20-related adapter-alpha (STRADA) pseudo kinase and CAB39. Phosphorylation at Thr-221 is inhibited in response to PTHLH/PTHrP. Phosphorylated at Thr-469 and Ser-551 in response to cAMP signaling. As to expression, expressed in chondrocytes.

The protein localises to the cytoplasm. It carries out the reaction L-seryl-[protein] + ATP = O-phospho-L-seryl-[protein] + ADP + H(+). The catalysed reaction is L-threonyl-[protein] + ATP = O-phospho-L-threonyl-[protein] + ADP + H(+). Activated by phosphorylation on Thr-221. Functionally, positive regulator of mTOR signaling that functions by triggering the degradation of DEPTOR, an mTOR inhibitor. Involved in the dynamic regulation of mTOR signaling in chondrocyte differentiation during skeletogenesis. Negatively regulates cAMP signaling pathway possibly by acting on CRTC2/TORC2 and CRTC3/TORC3. Prevents HDAC4 translocation to the nucleus. The sequence is that of Serine/threonine-protein kinase SIK3 from Homo sapiens (Human).